A 350-amino-acid polypeptide reads, in one-letter code: Protein-glutamate methylesterase/protein-glutamine glutaminase 2 (350 aa).

The Response regulatory domain occupies R3–E121. A 4-aspartylphosphate modification is found at D54. Residues I158 to A322 enclose the CheB-type methylesterase domain. Catalysis depends on residues S170, H197, and D290.

Belongs to the CheB family. In terms of processing, phosphorylated by CheA. Phosphorylation of the N-terminal regulatory domain activates the methylesterase activity.

The protein localises to the cytoplasm. It catalyses the reaction [protein]-L-glutamate 5-O-methyl ester + H2O = L-glutamyl-[protein] + methanol + H(+). It carries out the reaction L-glutaminyl-[protein] + H2O = L-glutamyl-[protein] + NH4(+). Functionally, involved in chemotaxis. Part of a chemotaxis signal transduction system that modulates chemotaxis in response to various stimuli. Catalyzes the demethylation of specific methylglutamate residues introduced into the chemoreceptors (methyl-accepting chemotaxis proteins or MCP) by CheR. Also mediates the irreversible deamidation of specific glutamine residues to glutamic acid. In Methanospirillum hungatei JF-1 (strain ATCC 27890 / DSM 864 / NBRC 100397 / JF-1), this protein is Protein-glutamate methylesterase/protein-glutamine glutaminase 2.